Here is a 128-residue protein sequence, read N- to C-terminus: Centrosomal protein 15 (128 aa).

The protein resides in the cell projection. The protein localises to the cilium. May play a role in ciliary assembly. The polypeptide is Centrosomal protein 15 (CEP15) (Bos taurus (Bovine)).